The primary structure comprises 83 residues: MPLKETTGKVVSDKMNKTIVVAVENRISHRKYAKTMTRTKKYKAHDENNECAVGDIVTIQETRPLSRTKCWTMVNILSKSFHN.

It belongs to the universal ribosomal protein uS17 family. As to quaternary structure, part of the 30S ribosomal subunit.

The protein localises to the plastid. The protein resides in the chloroplast. Its function is as follows. One of the primary rRNA binding proteins, it binds specifically to the 5'-end of 16S ribosomal RNA. The protein is Small ribosomal subunit protein uS17c (rps17) of Porphyra purpurea (Red seaweed).